Reading from the N-terminus, the 197-residue chain is Large ribosomal subunit protein uL13A (197 aa).

At serine 151 the chain carries Phosphoserine.

It belongs to the universal ribosomal protein uL13 family. In terms of assembly, component of the large ribosomal subunit (LSU). Mature yeast ribosomes consist of a small (40S) and a large (60S) subunit. The 40S small subunit contains 1 molecule of ribosomal RNA (18S rRNA) and at least 33 different proteins. The large 60S subunit contains 3 rRNA molecules (25S, 5.8S and 5S rRNA) and at least 46 different proteins.

The protein resides in the cytoplasm. Its subcellular location is the nucleus. It localises to the nucleolus. Functionally, component of the ribosome, a large ribonucleoprotein complex responsible for the synthesis of proteins in the cell. The small ribosomal subunit (SSU) binds messenger RNAs (mRNAs) and translates the encoded message by selecting cognate aminoacyl-transfer RNA (tRNA) molecules. The large subunit (LSU) contains the ribosomal catalytic site termed the peptidyl transferase center (PTC), which catalyzes the formation of peptide bonds, thereby polymerizing the amino acids delivered by tRNAs into a polypeptide chain. The nascent polypeptides leave the ribosome through a tunnel in the LSU and interact with protein factors that function in enzymatic processing, targeting, and the membrane insertion of nascent chains at the exit of the ribosomal tunnel. This is Large ribosomal subunit protein uL13A (rpl1602) from Schizosaccharomyces pombe (strain 972 / ATCC 24843) (Fission yeast).